The following is an 845-amino-acid chain: Ribosome-releasing factor 2, mitochondrial (845 aa).

A mitochondrion-targeting transit peptide spans 1 to 28 (MIIATSLRSQTFCTWRAWRAVHSTAVRL). Residues 38–330 (DRTRNIGIIA…GVVKYLPSPL (293 aa)) form the tr-type G domain. Residues 47–54 (AHIDAGKT), 111–115 (DTPGH), and 165–168 (NKMD) contribute to the GTP site.

It belongs to the TRAFAC class translation factor GTPase superfamily. Classic translation factor GTPase family. EF-G/EF-2 subfamily.

The protein resides in the mitochondrion. Mitochondrial GTPase that mediates the disassembly of ribosomes from messenger RNA at the termination of mitochondrial protein biosynthesis. Not involved in the GTP-dependent ribosomal translocation step during translation elongation. This chain is Ribosome-releasing factor 2, mitochondrial, found in Scheffersomyces stipitis (strain ATCC 58785 / CBS 6054 / NBRC 10063 / NRRL Y-11545) (Yeast).